Here is a 215-residue protein sequence, read N- to C-terminus: MEKAIVLLSAGLDSTVSLAYGVRNFQVVLGLTFNYGQKASRKEIEHSKKILDYYGIPQEVIELPFLKKITKTSLVAEDQEIPTGIDLESAAAVKTSMEKVWVPNRNGLFINIAAAYAESLGAKYIITGFNAEEAKTFSDNSREFVDAVNHALKYSTLNHVQVVSFTQNLEKSEIYRLGVELGAPLDLIWSCYYGGDEMCGVCESCLRLKRARGGN.

8–18 (LSAGLDSTVSL) provides a ligand contact to ATP. Zn(2+) contacts are provided by cysteine 191, cysteine 199, cysteine 202, and cysteine 205.

The protein belongs to the QueC family. Homodimer. It depends on Zn(2+) as a cofactor.

The catalysed reaction is 7-carboxy-7-deazaguanine + NH4(+) + ATP = 7-cyano-7-deazaguanine + ADP + phosphate + H2O + H(+). It participates in purine metabolism; 7-cyano-7-deazaguanine biosynthesis. Catalyzes the ATP-dependent conversion of 7-carboxy-7-deazaguanine (CDG) to 7-cyano-7-deazaguanine (preQ(0)). The protein is 7-cyano-7-deazaguanine synthase of Carboxydothermus hydrogenoformans (strain ATCC BAA-161 / DSM 6008 / Z-2901).